A 352-amino-acid chain; its full sequence is D-alanine--D-alanine ligase (352 aa).

The region spanning 133-342 (KTVFAAAGLP…FPKLVDRLIQ (210 aa)) is the ATP-grasp domain. ATP is bound at residue 169–224 (DETIGYPNFVKPANLGSSVGISKVRSRLELEAALDSAASFDRRIVVEAGVVAREVE). Asp295, Glu309, and Asn311 together coordinate Mg(2+).

The protein belongs to the D-alanine--D-alanine ligase family. Requires Mg(2+) as cofactor. Mn(2+) is required as a cofactor.

Its subcellular location is the cytoplasm. It catalyses the reaction 2 D-alanine + ATP = D-alanyl-D-alanine + ADP + phosphate + H(+). It participates in cell wall biogenesis; peptidoglycan biosynthesis. Cell wall formation. This is D-alanine--D-alanine ligase from Acaryochloris marina (strain MBIC 11017).